The primary structure comprises 228 residues: Octanoyltransferase (228 aa).

The BPL/LPL catalytic domain occupies 31-212; it reads GETDGILILL…KFSEVFGIHF (182 aa). Substrate is bound by residues 76–83, 143–145, and 156–158; these read RGGKITFH, AIG, and GIA. Catalysis depends on C174, which acts as the Acyl-thioester intermediate.

The protein belongs to the LipB family.

The protein resides in the cytoplasm. It carries out the reaction octanoyl-[ACP] + L-lysyl-[protein] = N(6)-octanoyl-L-lysyl-[protein] + holo-[ACP] + H(+). It participates in protein modification; protein lipoylation via endogenous pathway; protein N(6)-(lipoyl)lysine from octanoyl-[acyl-carrier-protein]: step 1/2. Its function is as follows. Catalyzes the transfer of endogenously produced octanoic acid from octanoyl-acyl-carrier-protein onto the lipoyl domains of lipoate-dependent enzymes. Lipoyl-ACP can also act as a substrate although octanoyl-ACP is likely to be the physiological substrate. This Thermoanaerobacter pseudethanolicus (strain ATCC 33223 / 39E) (Clostridium thermohydrosulfuricum) protein is Octanoyltransferase.